The chain runs to 312 residues: Probable cell division protein WhiA (312 aa).

A DNA-binding region (H-T-H motif) is located at residues 274–308 (SLKELGTLVPGGPISKSGVNHRLRKLNAYADELRQ).

Belongs to the WhiA family.

In terms of biological role, involved in cell division and chromosome segregation. The chain is Probable cell division protein WhiA from Limosilactobacillus fermentum (strain NBRC 3956 / LMG 18251) (Lactobacillus fermentum).